The chain runs to 432 residues: Adenylosuccinate synthetase (432 aa).

Residues 13-19 (GDEGKGK) and 41-43 (GHT) contribute to the GTP site. The active-site Proton acceptor is the Asp-14. Positions 14 and 41 each coordinate Mg(2+). IMP-binding positions include 14–17 (DEGK), 39–42 (NAGH), Thr-130, Arg-144, Gln-225, Thr-240, and Arg-304. His-42 acts as the Proton donor in catalysis. 300–306 (ATTGRRR) contacts substrate. GTP is bound by residues Arg-306, 332-334 (KLD), and 415-417 (STG).

This sequence belongs to the adenylosuccinate synthetase family. In terms of assembly, homodimer. Requires Mg(2+) as cofactor.

It localises to the cytoplasm. It catalyses the reaction IMP + L-aspartate + GTP = N(6)-(1,2-dicarboxyethyl)-AMP + GDP + phosphate + 2 H(+). Its pathway is purine metabolism; AMP biosynthesis via de novo pathway; AMP from IMP: step 1/2. Plays an important role in the de novo pathway of purine nucleotide biosynthesis. Catalyzes the first committed step in the biosynthesis of AMP from IMP. This chain is Adenylosuccinate synthetase, found in Salmonella choleraesuis (strain SC-B67).